The following is a 93-amino-acid chain: U12-lycotoxin-Ls1d (93 aa).

An N-terminal signal peptide occupies residues 1-18 (MKFAVILLFSLVVLAVAS). Residues 19 to 38 (ESVEEVRREIDIEDLPEQQR) constitute a propeptide that is removed on maturation.

The protein belongs to the neurotoxin 31 family. Post-translationally, contains 5 disulfide bonds. Expressed by the venom gland.

It is found in the secreted. This is U12-lycotoxin-Ls1d from Lycosa singoriensis (Wolf spider).